Reading from the N-terminus, the 508-residue chain is Beta-glucosidase 10 (508 aa).

The signal sequence occupies residues 1–22 (MKLYSLLSVFLVILLATSDSDA). Residues Q42, H142, and 187-188 (NE) each bind a beta-D-glucoside. The Proton donor role is filled by E188. C207 and C215 are disulfide-bonded. Residues N214 and N219 are each glycosylated (N-linked (GlcNAc...) asparagine). An a beta-D-glucoside-binding site is contributed by Y331. N365 carries N-linked (GlcNAc...) asparagine glycosylation. E398 lines the a beta-D-glucoside pocket. E398 (nucleophile) is an active-site residue. N431 carries an N-linked (GlcNAc...) asparagine glycan. A beta-D-glucoside contacts are provided by W441 and F457. N-linked (GlcNAc...) asparagine glycans are attached at residues N463, N485, and N501.

It belongs to the glycosyl hydrolase 1 family.

The enzyme catalyses Hydrolysis of terminal, non-reducing beta-D-glucosyl residues with release of beta-D-glucose.. The polypeptide is Beta-glucosidase 10 (Arabidopsis thaliana (Mouse-ear cress)).